Consider the following 94-residue polypeptide: ESAT-6-like protein EsxL (94 aa).

It belongs to the WXG100 family. ESAT-6 subfamily. As to quaternary structure, strongly interacts with EsxK to form a heterodimeric complex under reducing conditions. The complex is regulated by the redox state of EsxL.

It is found in the secreted. Induces apoptosis of host cells. Is immunogenic with highly specific seroreactivity towards TB patients' serum. In Mycobacterium tuberculosis (strain ATCC 25618 / H37Rv), this protein is ESAT-6-like protein EsxL.